A 375-amino-acid chain; its full sequence is Queuine tRNA-ribosyltransferase (375 aa).

Aspartate 89 (proton acceptor) is an active-site residue. Residues 89–93 (DSGGF), aspartate 143, glutamine 185, and glycine 212 each bind substrate. Residues 243-249 (GVGKPED) are RNA binding. Catalysis depends on aspartate 262, which acts as the Nucleophile. Residues 267-271 (TRNAR) form an RNA binding; important for wobble base 34 recognition region. Zn(2+)-binding residues include cysteine 300, cysteine 302, cysteine 305, and histidine 331.

The protein belongs to the queuine tRNA-ribosyltransferase family. Homodimer. Within each dimer, one monomer is responsible for RNA recognition and catalysis, while the other monomer binds to the replacement base PreQ1. Zn(2+) is required as a cofactor.

It catalyses the reaction 7-aminomethyl-7-carbaguanine + guanosine(34) in tRNA = 7-aminomethyl-7-carbaguanosine(34) in tRNA + guanine. Its pathway is tRNA modification; tRNA-queuosine biosynthesis. Functionally, catalyzes the base-exchange of a guanine (G) residue with the queuine precursor 7-aminomethyl-7-deazaguanine (PreQ1) at position 34 (anticodon wobble position) in tRNAs with GU(N) anticodons (tRNA-Asp, -Asn, -His and -Tyr). Catalysis occurs through a double-displacement mechanism. The nucleophile active site attacks the C1' of nucleotide 34 to detach the guanine base from the RNA, forming a covalent enzyme-RNA intermediate. The proton acceptor active site deprotonates the incoming PreQ1, allowing a nucleophilic attack on the C1' of the ribose to form the product. After dissociation, two additional enzymatic reactions on the tRNA convert PreQ1 to queuine (Q), resulting in the hypermodified nucleoside queuosine (7-(((4,5-cis-dihydroxy-2-cyclopenten-1-yl)amino)methyl)-7-deazaguanosine). This Pseudoalteromonas translucida (strain TAC 125) protein is Queuine tRNA-ribosyltransferase.